The sequence spans 4639 residues: Dynein heavy chain, cytoplasmic (4639 aa).

The tract at residues 1-1856 (MGDSLENPDT…TIHMANARFF (1856 aa)) is stem. 3 coiled-coil regions span residues 530 to 565 (LDITKEGSEAWEAAVKRYEEKIDRVETRITAHLRDQ), 774 to 794 (SLIESVRTYERTLEKIEDRAS), and 1264 to 1368 (DDAL…ARLR). AAA stretches follow at residues 1857–2084 (YGFE…VLIS), 2166–2437 (EEIR…FTRL), 2541–2790 (EVET…WVRG), and 2884–3153 (VFYE…GGRT). ATP is bound by residues 1895-1902 (GPAGTGKT), 2210-2217 (GPSGSGKS), 2580-2587 (GPPGSGKT), and 2922-2929 (GVSGAGKT). 3 coiled-coil regions span residues 3189–3261 (GLNK…EKRK), 3382–3478 (AIAQ…WEST), and 3723–3782 (EFRL…EIET). The stalk stretch occupies residues 3189 to 3478 (GLNKIAETVE…NIERERWEST (290 aa)). AAA regions lie at residues 3539-3768 (LSNP…DINQ) and 3989-4205 (AHNV…TLDT).

It belongs to the dynein heavy chain family. In terms of assembly, consists of at least two heavy chains and a number of intermediate and light chains.

The protein localises to the cytoplasm. Its subcellular location is the cytoskeleton. Functionally, cytoplasmic dynein acts as a motor for the intracellular retrograde motility of vesicles and organelles along microtubules. Dynein has ATPase activity; the force-producing power stroke is thought to occur on release of ADP. This chain is Dynein heavy chain, cytoplasmic (Dhc64C), found in Drosophila melanogaster (Fruit fly).